The following is a 299-amino-acid chain: Tyrosine recombinase XerC (299 aa).

Residues 1–85 enclose the Core-binding (CB) domain; the sequence is MKRQLEAYCA…AVRGLYRYLN (85 aa). One can recognise a Tyr recombinase domain in the interval 106 to 285; the sequence is RLPKVLDTDR…DFQHLAAVYD (180 aa). Catalysis depends on residues Arg-146, Lys-170, His-237, Arg-240, and His-263. Tyr-272 functions as the O-(3'-phospho-DNA)-tyrosine intermediate in the catalytic mechanism.

It belongs to the 'phage' integrase family. XerC subfamily. In terms of assembly, forms a cyclic heterotetrameric complex composed of two molecules of XerC and two molecules of XerD.

The protein localises to the cytoplasm. Functionally, site-specific tyrosine recombinase, which acts by catalyzing the cutting and rejoining of the recombining DNA molecules. The XerC-XerD complex is essential to convert dimers of the bacterial chromosome into monomers to permit their segregation at cell division. It also contributes to the segregational stability of plasmids. This chain is Tyrosine recombinase XerC, found in Pseudomonas putida (strain ATCC 47054 / DSM 6125 / CFBP 8728 / NCIMB 11950 / KT2440).